Consider the following 405-residue polypeptide: Phosphoglycerate kinase (405 aa).

Residues 24–26 (DFN), Arg-40, 63–66 (HLGR), Arg-122, and Arg-162 contribute to the substrate site. ATP-binding positions include Lys-213, Glu-332, and 361–364 (GGDS).

The protein belongs to the phosphoglycerate kinase family. As to quaternary structure, monomer.

It localises to the cytoplasm. It catalyses the reaction (2R)-3-phosphoglycerate + ATP = (2R)-3-phospho-glyceroyl phosphate + ADP. The protein operates within carbohydrate degradation; glycolysis; pyruvate from D-glyceraldehyde 3-phosphate: step 2/5. This is Phosphoglycerate kinase from Corynebacterium diphtheriae (strain ATCC 700971 / NCTC 13129 / Biotype gravis).